Reading from the N-terminus, the 397-residue chain is Growth-regulating factor 1 (397 aa).

The QLQ domain maps to 18–53; that stretch reads PFTASQWQELEHQALIYKYMASGTPIPSDLILPLRR. 2 short sequence motifs (bipartite nuclear localization signal) span residues 86–105 and 123–130; these read RKAE…KKWR and RGKNRSRK. The region spanning 90–134 is the WRC domain; sequence DPEPGRCRRTDGKKWRCSKEAYPDSKYCEKHMHRGKNRSRKPVEM. Residues 117–176 are disordered; sequence CEKHMHRGKNRSRKPVEMSLATPPPPSSSATSAASNTSAGVAPTTTTTSSPAPSYSRPAP. Positions 120-129 are enriched in basic residues; it reads HMHRGKNRSR. Over residues 144-174 the composition is skewed to low complexity; that stretch reads SSATSAASNTSAGVAPTTTTTSSPAPSYSRP.

Belongs to the GRF family.

The protein resides in the nucleus. Transcription activator that plays a regulatory role in gibberellin-induced stem elongation. This Oryza sativa subsp. japonica (Rice) protein is Growth-regulating factor 1 (GRF1).